Reading from the N-terminus, the 303-residue chain is N-acetyl-D-glucosamine kinase (303 aa).

ATP-binding positions include 4 to 11 (GFDIGGTK) and 133 to 140 (GVGGGLVL). Residues histidine 157, cysteine 177, cysteine 179, and cysteine 184 each contribute to the Zn(2+) site.

It belongs to the ROK (NagC/XylR) family. NagK subfamily.

It carries out the reaction N-acetyl-D-glucosamine + ATP = N-acetyl-D-glucosamine 6-phosphate + ADP + H(+). It participates in cell wall biogenesis; peptidoglycan recycling. Catalyzes the phosphorylation of N-acetyl-D-glucosamine (GlcNAc) derived from cell-wall degradation, yielding GlcNAc-6-P. This chain is N-acetyl-D-glucosamine kinase, found in Salmonella newport (strain SL254).